We begin with the raw amino-acid sequence, 534 residues long: BEN domain-containing protein 4 (534 aa).

3 disordered regions span residues 1–24 (MEEE…RSPY), 48–128 (ELPH…AASS), and 287–322 (VHTL…EEGY). A compositionally biased stretch (pro residues) spans 53 to 63 (RAPPPPPPPFA). Over residues 69–83 (SISSSEPPPQQFQAQ) the composition is skewed to polar residues. The segment covering 91-109 (GRAAAAASSSSPSCTPATS) has biased composition (low complexity). Polar residues predominate over residues 295-310 (SPATSESHGHPSSSTL). Positions 311-321 (PEEEEEEDEEG) are enriched in acidic residues. Residues 324-351 (PRCQELEQEVISLQQENEELRRKLESIP) adopt a coiled-coil conformation. The BEN domain occupies 390–498 (NYPVYITSKQ…DAVGHARQGR (109 aa)).

The polypeptide is BEN domain-containing protein 4 (BEND4) (Homo sapiens (Human)).